A 143-amino-acid polypeptide reads, in one-letter code: Small ribosomal subunit protein uS12 (143 aa).

A compositionally biased stretch (basic residues) spans Met-1–Gln-20. Residues Met-1 to Lys-28 are disordered. Pro-62 is modified (hydroxyproline).

It belongs to the universal ribosomal protein uS12 family. Component of the 40S small ribosomal subunit.

Its subcellular location is the cytoplasm. It is found in the cytosol. The protein localises to the rough endoplasmic reticulum. This Lumbricus rubellus (Humus earthworm) protein is Small ribosomal subunit protein uS12 (RPS23).